A 201-amino-acid polypeptide reads, in one-letter code: Recombination protein RecR (201 aa).

Residues 60-75 form a C4-type zinc finger; it reads CSRCGNVDTVDPCTVC. The Toprim domain occupies 83-178; the sequence is SVIIVVEDVS…KITRLAHGVP (96 aa).

The protein belongs to the RecR family.

Functionally, may play a role in DNA repair. It seems to be involved in an RecBC-independent recombinational process of DNA repair. It may act with RecF and RecO. This is Recombination protein RecR from Rhizobium etli (strain ATCC 51251 / DSM 11541 / JCM 21823 / NBRC 15573 / CFN 42).